The following is a 613-amino-acid chain: Chitin synthase 8 (613 aa).

The interval 1 to 73 (MAVSPTAKRK…PAPLTRPPPP (73 aa)) is disordered. Residue N17 is glycosylated (N-linked (GlcNAc...) asparagine). A compositionally biased stretch (polar residues) spans 18-27 (LSRQSSSART). Residues 61–73 (ESPPAPLTRPPPP) show a composition bias toward pro residues. A run of 2 helical transmembrane segments spans residues 119–139 (YSLI…LWNY) and 142–162 (YWYI…IFAI). N312, N421, and N471 each carry an N-linked (GlcNAc...) asparagine glycan. 2 helical membrane passes run 556 to 576 (VTTW…AIAL) and 583 to 602 (IFEN…RYAA).

It belongs to the chitin synthase family.

It is found in the cell membrane. It carries out the reaction [(1-&gt;4)-N-acetyl-beta-D-glucosaminyl](n) + UDP-N-acetyl-alpha-D-glucosamine = [(1-&gt;4)-N-acetyl-beta-D-glucosaminyl](n+1) + UDP + H(+). Polymerizes chitin, a structural polymer of the cell wall and septum, by transferring the sugar moiety of UDP-GlcNAc to the non-reducing end of the growing chitin polymer. Plays a role in cell wall integrity. Plays a key role in pathogenicity. Likely contributes to post-penetration virulence. In Verticillium dahliae (strain VdLs.17 / ATCC MYA-4575 / FGSC 10137) (Verticillium wilt), this protein is Chitin synthase 8.